A 664-amino-acid polypeptide reads, in one-letter code: Transketolase 1 (664 aa).

His26 serves as a coordination point for substrate. Thiamine diphosphate-binding positions include His66 and 114–116 (GPL). Asp155 lines the Mg(2+) pocket. Thiamine diphosphate contacts are provided by Gly156 and Asn185. Mg(2+) is bound by residues Asn185 and Ile187. Substrate contacts are provided by His260, Arg357, and Ser384. His260 contacts thiamine diphosphate. The Proton donor role is filled by Glu411. Phe437 serves as a coordination point for thiamine diphosphate. Substrate contacts are provided by His461, Asp469, and Arg520.

Belongs to the transketolase family. In terms of assembly, homodimer. It depends on Mg(2+) as a cofactor. The cofactor is Ca(2+). Requires Mn(2+) as cofactor. Co(2+) serves as cofactor. Thiamine diphosphate is required as a cofactor.

The enzyme catalyses D-sedoheptulose 7-phosphate + D-glyceraldehyde 3-phosphate = aldehydo-D-ribose 5-phosphate + D-xylulose 5-phosphate. Its function is as follows. Catalyzes the transfer of a two-carbon ketol group from a ketose donor to an aldose acceptor, via a covalent intermediate with the cofactor thiamine pyrophosphate. This Vibrio vulnificus (strain CMCP6) protein is Transketolase 1 (tkt1).